Reading from the N-terminus, the 201-residue chain is 3-mercaptopropionate dioxygenase (201 aa).

Fe cation-binding residues include His-89, His-91, and His-142.

The protein belongs to the cysteine dioxygenase family. Forms homodimer in the crystal; however, there is no evidence that the dimer exists under physiological conditions or has biological significance. Requires Fe(2+) as cofactor.

It catalyses the reaction 3-sulfanylpropanoate + O2 = 3-sulfinopropanoate + H(+). In terms of biological role, thiol dioxygenase that catalyzes the dioxygenation of 3-mercaptopropionate (3-MPA) to 3-sulfinopropionate (3-SPA). To a lesser extent (40-fold lower efficiency), is also able to oxidize cysteine to cysteine sulfinate (CSA). Cannot use N-acetyl-L-cysteine, homocysteine, and cysteamine as substrates. The physiological role of this enzyme is unclear. This chain is 3-mercaptopropionate dioxygenase, found in Pseudomonas aeruginosa (strain ATCC 15692 / DSM 22644 / CIP 104116 / JCM 14847 / LMG 12228 / 1C / PRS 101 / PAO1).